Consider the following 2718-residue polypeptide: E3 SUMO-protein ligase RanBP2 (2718 aa).

The sufficient for interaction with Hsp83 stretch occupies residues 1–100 (MFTTRKEVDA…DPRQSEVVID (100 aa)). Residues 1 to 200 (MFTTRKEVDA…EKMKIDQAFN (200 aa)) are sufficient for interaction with piwi. TPR repeat units lie at residues 26–58 (DIKGLAVARLYMKVQEYPKAIEYLNGYLRVRDD) and 59–94 (AVGHNMIATCYSRLNPPDVTEALQHYQRSIQIDPRQ). Disordered regions lie at residues 796–816 (QQDRNSRGIDNSFGSPDVHNN) and 937–959 (EHQQQQQHQQQQSHNQGAIHPVV). Residues 803–816 (GIDNSFGSPDVHNN) are compositionally biased toward polar residues. Repeat 1 spans residues 808-809 (FG). Residues 808–2581 (FGSPDVHNNS…GEENETKLFG (1774 aa)) are 27 X 2 AA repeats of F-G. Over residues 938–948 (HQQQQQHQQQQ) the composition is skewed to low complexity. Repeat copies occupy residues 1028–1029 (FG), 1035–1036 (FG), and 1104–1105 (FG). The disordered stretch occupies residues 1181–1208 (QPVEKEPPANVVITSSDPLPKPTTASVQ). Positions 1192–1208 (VITSSDPLPKPTTASVQ) are enriched in polar residues. The stretch at 1252-1253 (FG) is repeat 5. Disordered stretches follow at residues 1263–1314 (FKTQ…KPII) and 1483–1502 (NKPQEQTKTQPNPDPPATAA). Polar residues predominate over residues 1284–1299 (NQSGATDPNKTLPQDT). The RanBD1 1 domain occupies 1309–1445 (DFKPIIPLPD…FTKASEAAKS (137 aa)). The span at 1483 to 1493 (NKPQEQTKTQP) shows a compositional bias: polar residues. 4 consecutive repeat copies span residues 1506–1507 (FG), 1539–1540 (FG), 1547–1548 (FG), and 1552–1553 (FG). The 138-residue stretch at 1605–1742 (QFVPVIALPD…VQKAQQSIGN (138 aa)) folds into the RanBD1 2 domain. The disordered stretch occupies residues 1738–1761 (QSIGNEPKKEEVPSAAGEKEKPIK). Positions 1743 to 1760 (EPKKEEVPSAAGEKEKPI) are enriched in basic and acidic residues. Repeat unit 10 spans residues 1763–1764 (FG). The segment at 1770 to 1799 (KAGSWNCQACYTNNGQDQLYCLACQEPKDA) adopts a RanBP2-type 1 zinc-finger fold. 4 tandem repeats follow at residues 1826-1827 (FG), 1842-1843 (FG), 1874-1875 (FG), and 1883-1884 (FG). The segment at 1890-1919 (AVGSWSCSACYVNNPGESLYCSACDAPKND) adopts a RanBP2-type 2 zinc-finger fold. 2 consecutive repeat copies span residues 1942–1943 (FG) and 1944–1945 (FG). Disordered regions lie at residues 1981 to 2021 (FTFS…TYFS), 2154 to 2204 (EDSP…THEV), and 2239 to 2273 (SLSRNNSSASEASKTPSSAFIFGSTDKSEPGKDAG). Residues 2002-2016 (EDEDNDSQEVEEEEN) are compositionally biased toward acidic residues. The region spanning 2019–2151 (YFSPVIPLPD…IKNALNETAK (133 aa)) is the RanBD1 3 domain. The segment covering 2161–2175 (SVSQSTEANKPSQKN) has biased composition (polar residues). The segment covering 2239–2257 (SLSRNNSSASEASKTPSSA) has biased composition (low complexity). Repeat copies occupy residues 2260-2261 (FG), 2313-2314 (FG), 2332-2333 (FG), 2352-2353 (FG), 2360-2361 (FG), 2366-2367 (FG), 2393-2394 (FG), 2399-2400 (FG), 2415-2416 (FG), 2421-2422 (FG), and 2580-2581 (FG). The disordered stretch occupies residues 2320-2346 (AEQQKKDSSESVFGGNKADSQSPATQE). Positions 2556-2699 (HYDAIVELPD…VNSCIKRAKA (144 aa)) constitute a RanBD1 4 domain.

This sequence belongs to the RanBP2 E3 ligase family. In terms of assembly, part of the nuclear pore complex. Forms a complex with Nxt1, sbr/Nxf1 and RanGAP. Interacts (via TPR repeats) with Hsp83; the interaction is required for the nuclear import of the sesquiterpenoid juvenile hormone receptor Met. Interacts (via N-terminus) with piwi. In terms of tissue distribution, expressed in both oocytes and nurse cells (at protein level).

The protein resides in the nucleus. The protein localises to the nuclear pore complex. E3 SUMO-protein ligase. Component of the nuclear pore complex (NPC), a complex required for trafficking across the nuclear envelope. Required for nuclear import of nuclear localization signal (NLS)-containing proteins in an importin alpha/importin beta-dependent manner, but also for the nuclear import of specific proteins such as phosphorylated Mad or the sesquiterpenoid juvenile hormone receptor Met as part of the juvenile hormone signal transduction pathway. Plays a role in nuclear mRNA export by recruiting the mRNA transport complex composed of Nxt1 and sbr/Nxf1 to the NPC. Essential during germline development for transposon silencing and piRNA biogenesis probably by regulating piwi localization to the nucleus. During oogenesis, required to form granules that modulate the biogenesis of annulate lamellae containing nuclear pore complex components. The protein is E3 SUMO-protein ligase RanBP2 of Drosophila melanogaster (Fruit fly).